The primary structure comprises 294 residues: UDP-3-O-acyl-N-acetylglucosamine deacetylase (294 aa).

Histidine 75, histidine 232, and aspartate 236 together coordinate Zn(2+). The Proton donor role is filled by histidine 259.

The protein belongs to the LpxC family. The cofactor is Zn(2+).

The catalysed reaction is a UDP-3-O-[(3R)-3-hydroxyacyl]-N-acetyl-alpha-D-glucosamine + H2O = a UDP-3-O-[(3R)-3-hydroxyacyl]-alpha-D-glucosamine + acetate. It participates in glycolipid biosynthesis; lipid IV(A) biosynthesis; lipid IV(A) from (3R)-3-hydroxytetradecanoyl-[acyl-carrier-protein] and UDP-N-acetyl-alpha-D-glucosamine: step 2/6. In terms of biological role, catalyzes the hydrolysis of UDP-3-O-myristoyl-N-acetylglucosamine to form UDP-3-O-myristoylglucosamine and acetate, the committed step in lipid A biosynthesis. In Campylobacter jejuni (strain RM1221), this protein is UDP-3-O-acyl-N-acetylglucosamine deacetylase.